The sequence spans 226 residues: Large ribosomal subunit protein mL67 (226 aa).

This sequence belongs to the mitochondrion-specific ribosomal protein mL67 family. In terms of assembly, component of the mitochondrial large ribosomal subunit (mt-LSU). Mature yeast 74S mitochondrial ribosomes consist of a small (37S) and a large (54S) subunit. The 37S small subunit contains a 15S ribosomal RNA (15S mt-rRNA) and 34 different proteins. The 54S large subunit contains a 21S rRNA (21S mt-rRNA) and 46 different proteins.

It localises to the nucleus. The protein resides in the mitochondrion. In terms of biological role, component of the mitochondrial ribosome (mitoribosome), a dedicated translation machinery responsible for the synthesis of mitochondrial genome-encoded proteins, including at least some of the essential transmembrane subunits of the mitochondrial respiratory chain. The mitoribosomes are attached to the mitochondrial inner membrane and translation products are cotranslationally integrated into the membrane. mL67/MHR1 also has extraribosomal functions, being involved in regulation of mitochondrial DNA recombination, maintenance and repair, and generation of homoplasmic cells. mL67/MHR1 also acts as transcription factor involved in regulation of RNA polymerase II-dependent transcription. The polypeptide is Large ribosomal subunit protein mL67 (MHR1) (Saccharomyces cerevisiae (strain ATCC 204508 / S288c) (Baker's yeast)).